The chain runs to 1571 residues: Phosphatidylinositol 3-kinase 1 (1571 aa).

Residues M1–N73 show a composition bias toward low complexity. Disordered regions lie at residues M1–N119, G157–N195, and N283–R430. Positions I74–Q85 are enriched in basic and acidic residues. Residues N101–N119 are compositionally biased toward low complexity. Basic and acidic residues predominate over residues N283 to P292. Residues T294–T324 are compositionally biased toward low complexity. Polar residues predominate over residues N325–K337. Low complexity-rich tracts occupy residues K360 to K382 and N405 to N424. In terms of domain architecture, PI3K-ABD spans I530–S627. Residues G700–Q789 form the PI3K-RBD domain. The region spanning I851–N1020 is the C2 PI3K-type domain. Residues Q1040–A1216 form the PIK helical domain. The region spanning I1280–T1558 is the PI3K/PI4K catalytic domain. Residues Y1286 to L1292 form a G-loop region. A catalytic loop region spans residues G1424 to N1432. Residues H1443 to T1469 are activation loop.

It belongs to the PI3/PI4-kinase family.

It catalyses the reaction a 1,2-diacyl-sn-glycero-3-phospho-(1D-myo-inositol) + ATP = a 1,2-diacyl-sn-glycero-3-phospho-(1D-myo-inositol-3-phosphate) + ADP + H(+). In Dictyostelium discoideum (Social amoeba), this protein is Phosphatidylinositol 3-kinase 1 (pikA).